The following is a 159-amino-acid chain: MSDRIYLTRDGYNRLKEELYVLIHQTRKEVLEKIAEARSHGDLSENAEYDAAREQQSQTEARIADLENKLSTATILDPKLIKTDKVYILTSVKLKNLQVEDEVIEYTLVSSEEADTDLGKISVRSPVGRSLIGKTVGDKVHITVPKGELHFEILDIFVK.

A coiled-coil region spans residues 44–75 (SENAEYDAAREQQSQTEARIADLENKLSTATI).

It belongs to the GreA/GreB family.

Necessary for efficient RNA polymerase transcription elongation past template-encoded arresting sites. The arresting sites in DNA have the property of trapping a certain fraction of elongating RNA polymerases that pass through, resulting in locked ternary complexes. Cleavage of the nascent transcript by cleavage factors such as GreA or GreB allows the resumption of elongation from the new 3'terminus. GreA releases sequences of 2 to 3 nucleotides. The protein is Transcription elongation factor GreA of Chlorobium limicola (strain DSM 245 / NBRC 103803 / 6330).